A 246-amino-acid chain; its full sequence is Large ribosomal subunit protein uL3 (246 aa).

Disordered stretches follow at residues 140–162 (SHRS…NKKM) and 215–246 (DVPL…EENA). Position 151 is an N5-methylglutamine (glutamine 151). Residues 234–246 (EAAPEAPASEENA) show a composition bias toward low complexity.

The protein belongs to the universal ribosomal protein uL3 family. As to quaternary structure, part of the 50S ribosomal subunit. Forms a cluster with proteins L14 and L19. Methylated by PrmB.

Its function is as follows. One of the primary rRNA binding proteins, it binds directly near the 3'-end of the 23S rRNA, where it nucleates assembly of the 50S subunit. The protein is Large ribosomal subunit protein uL3 of Methylorubrum populi (strain ATCC BAA-705 / NCIMB 13946 / BJ001) (Methylobacterium populi).